We begin with the raw amino-acid sequence, 394 residues long: Phosphopentomutase (394 aa).

Mn(2+) contacts are provided by Asp13, Asp286, His291, Asp327, His328, and His339.

This sequence belongs to the phosphopentomutase family. Mn(2+) is required as a cofactor.

It localises to the cytoplasm. The catalysed reaction is 2-deoxy-alpha-D-ribose 1-phosphate = 2-deoxy-D-ribose 5-phosphate. It carries out the reaction alpha-D-ribose 1-phosphate = D-ribose 5-phosphate. Its pathway is carbohydrate degradation; 2-deoxy-D-ribose 1-phosphate degradation; D-glyceraldehyde 3-phosphate and acetaldehyde from 2-deoxy-alpha-D-ribose 1-phosphate: step 1/2. Functionally, isomerase that catalyzes the conversion of deoxy-ribose 1-phosphate (dRib-1-P) and ribose 1-phosphate (Rib-1-P) to deoxy-ribose 5-phosphate (dRib-5-P) and ribose 5-phosphate (Rib-5-P), respectively. The polypeptide is Phosphopentomutase (Bacillus anthracis (strain A0248)).